The chain runs to 214 residues: MGKRIGLLGGTFDPVHIGHLRGALEVAESMQLDELRLVPSARPPHRDTPQVSALDRLAMVECAVAGVSPLVVDDRELKRDKPSYTIDTLEQMRAELAADDQLFLLLGWDAFCGLPTWHRWEELLQHCHILVLQRPDADSEPPDALRNLLAARSVSDPLALQGPGGHIAFVWQTPLAVSATQIRQLLASGKSVRFLVPDAVLAYIDAHGLYRAPN.

The protein belongs to the NadD family.

It catalyses the reaction nicotinate beta-D-ribonucleotide + ATP + H(+) = deamido-NAD(+) + diphosphate. It participates in cofactor biosynthesis; NAD(+) biosynthesis; deamido-NAD(+) from nicotinate D-ribonucleotide: step 1/1. Functionally, catalyzes the reversible adenylation of nicotinate mononucleotide (NaMN) to nicotinic acid adenine dinucleotide (NaAD). This Pseudomonas fluorescens (strain ATCC BAA-477 / NRRL B-23932 / Pf-5) protein is Probable nicotinate-nucleotide adenylyltransferase.